The sequence spans 552 residues: Kumamolisin (552 aa).

The segment covering 1–17 has biased composition (basic and acidic residues); the sequence is MSDMEKPWKEEEKREVL. The interval 1–34 is disordered; that stretch reads MSDMEKPWKEEEKREVLAGHARRQAPQAVDKGPV. In terms of domain architecture, Peptidase S53 spans 193 to 546; that stretch reads AYTPLDVAQA…IRLLQALLPS (354 aa). Active-site charge relay system residues include E266, D270, and S466. Ca(2+) contacts are provided by D504, I505, G522, G524, and D526.

Forms monomeric and dimeric crystals. The cofactor is Ca(2+). In terms of processing, autocatalytically processed.

It localises to the secreted. It carries out the reaction The enzyme preferentially hydrolyzes peptides having an Ala or Pro residue at P2 position and prefers such charged amino acid residues as Glu or Arg at the P2' position. In the oxidized insulin B chain, kumamolysin preferentially cleaves between Leu(15) and Tyr(16).. Its activity is regulated as follows. Inactivated at 22.4 and 37 degrees Celsius, but not at 60 degrees Celsius, by aldehyde-type inhibitors such as acetyl-Ile-Ala-Phe-CHO and acetyl-Ile-Pro-Phe-CHO. Insensitive to the known carboxyl proteinase inhibitors pepstatin, diazoacetyl-DL-norleucine methyl ester (DAN) and 1,2-epoxy-3-(p-nitrophenoxy)propane (EPNP). Not inhibited by Ala-Ala-Phe-chloromethylketone, an inhibitor of the human tripeptidyl-peptidase 1. Thermostable pepstatin-insensitive serine-carboxyl proteinase. Preferentially hydrolyzes synthetic peptides having an Ala or Pro residue at the P2 position and charged amino acids such as Glu or Arg at the P2' position. In vitro, specifically hydrolyzes the Leu-15-Tyr-16 peptide bond in oxidized insulin B-chain. Additional cleavage of oxidized insulin B-chain at Phe-25-Tyr-26 is detected at a considerably lower rate. Can hydrolyze collagen and the chromogenic substrate azocoll. Shows lower activity with albumin and casein. Shows very weak tripeptidyl peptidase activity. In Bacillus sp. (strain MN-32), this protein is Kumamolisin.